The following is a 305-amino-acid chain: Methionyl-tRNA formyltransferase (305 aa).

Position 109–112 (109–112 (SLLP)) interacts with (6S)-5,6,7,8-tetrahydrofolate.

It belongs to the Fmt family.

The catalysed reaction is L-methionyl-tRNA(fMet) + (6R)-10-formyltetrahydrofolate = N-formyl-L-methionyl-tRNA(fMet) + (6S)-5,6,7,8-tetrahydrofolate + H(+). Functionally, attaches a formyl group to the free amino group of methionyl-tRNA(fMet). The formyl group appears to play a dual role in the initiator identity of N-formylmethionyl-tRNA by promoting its recognition by IF2 and preventing the misappropriation of this tRNA by the elongation apparatus. The sequence is that of Methionyl-tRNA formyltransferase from Roseobacter denitrificans (strain ATCC 33942 / OCh 114) (Erythrobacter sp. (strain OCh 114)).